Here is an 864-residue protein sequence, read N- to C-terminus: MPDISLKVLSNEIKISIQELIKELSIIGITKTEDNYINVLEKNILLKHLESKKKYSLDTLVLQRKTRSTLRISTVGGKNKSVQVEVRKKRAYVKNNKFENESFLNEKKVIKHSMQKTSSLKNKEKKYIKNIEKIELNKSDSRSLNTKKENKLKISNKDEQNKKFNQHRESNSFDLNHKKRIKENKDIRISHKEEKQDYHLTTFLHARQAEDENDREVEIDKRNHGRILKNYRQKKNNKNFHNGRYNKEEIRTFNRNKKNSKQKNKPILLQQVFQKPESIINRDVIISNTITVSDLANKMAIKSSEVIKNMMNMGIIGTINHVLDQDTAQLIAEEMGHKVIVHRENALEELIMKDRDTGNDVSAIRAPVVTIMGHVDHGKTSLLDYIRSTKTAFYEAGGITQNIGAYHVKTDLGSITFLDTPGHSAFTAMRSRGVQITDIVILVVAADDGVMPQTIEAIQHAKEANVPVIVAINKIDKTDSDIDKVRNDLMKYNILSEEWGGENIFVSVSAKTGKGINKLLNVILLQAEMLELKAVTTGMAEGIVVESFLDKGRGPIATVLVKKGQLKKGDVILCGFEYGRIKSLRDASGNEVFSAGPSIPVEVLGLSKVPFSGDVVTVVRDEKKAREVASYRKEKSREKKLSNQNRINLENMFDDINKNNVSELKIILKSDIQGSLEAISGALLKLSTEEVKIKIIGLGIGGITETDASLALASNAIILGFNVRADTSAKKIINSEHLDLRYYSVIYDLLDEVKAAMTGLLSPEYKENIIGLAEVRNTFKSPKFGLIAGCMVTEGVIKRSNPIHILRNNIVIYEGELESLRRFKEDVNEIRNGLECGIGIKNYNDIRVGDIIEVFEVREMKRIL.

Positions 140–171 are enriched in basic and acidic residues; it reads DSRSLNTKKENKLKISNKDEQNKKFNQHRESN. Residues 140 to 179 are disordered; it reads DSRSLNTKKENKLKISNKDEQNKKFNQHRESNSFDLNHKK. Residues 364–533 enclose the tr-type G domain; that stretch reads IRAPVVTIMG…LLQAEMLELK (170 aa). The interval 373-380 is G1; sequence GHVDHGKT. 373–380 contacts GTP; sequence GHVDHGKT. The G2 stretch occupies residues 398–402; that stretch reads GITQN. Positions 419–422 are G3; it reads DTPG. GTP-binding positions include 419 to 423 and 473 to 476; these read DTPGH and NKID. Residues 473-476 form a G4 region; the sequence is NKID. The G5 stretch occupies residues 509–511; it reads SAK.

The protein belongs to the TRAFAC class translation factor GTPase superfamily. Classic translation factor GTPase family. IF-2 subfamily.

It localises to the cytoplasm. Functionally, one of the essential components for the initiation of protein synthesis. Protects formylmethionyl-tRNA from spontaneous hydrolysis and promotes its binding to the 30S ribosomal subunits. Also involved in the hydrolysis of GTP during the formation of the 70S ribosomal complex. This Buchnera aphidicola subsp. Acyrthosiphon pisum (strain 5A) protein is Translation initiation factor IF-2.